Reading from the N-terminus, the 334-residue chain is UDP-N-acetylglucosamine--N-acetylmuramyl-(pentapeptide) pyrophosphoryl-undecaprenol N-acetylglucosamine transferase (334 aa).

Residues 11–13, Asn-125, Ser-185, Ile-229, and Gln-274 contribute to the UDP-N-acetyl-alpha-D-glucosamine site; that span reads TGG.

It belongs to the glycosyltransferase 28 family. MurG subfamily.

Its subcellular location is the cell inner membrane. The enzyme catalyses di-trans,octa-cis-undecaprenyl diphospho-N-acetyl-alpha-D-muramoyl-L-alanyl-D-glutamyl-meso-2,6-diaminopimeloyl-D-alanyl-D-alanine + UDP-N-acetyl-alpha-D-glucosamine = di-trans,octa-cis-undecaprenyl diphospho-[N-acetyl-alpha-D-glucosaminyl-(1-&gt;4)]-N-acetyl-alpha-D-muramoyl-L-alanyl-D-glutamyl-meso-2,6-diaminopimeloyl-D-alanyl-D-alanine + UDP + H(+). The protein operates within cell wall biogenesis; peptidoglycan biosynthesis. Functionally, cell wall formation. Catalyzes the transfer of a GlcNAc subunit on undecaprenyl-pyrophosphoryl-MurNAc-pentapeptide (lipid intermediate I) to form undecaprenyl-pyrophosphoryl-MurNAc-(pentapeptide)GlcNAc (lipid intermediate II). In Thermosipho melanesiensis (strain DSM 12029 / CIP 104789 / BI429), this protein is UDP-N-acetylglucosamine--N-acetylmuramyl-(pentapeptide) pyrophosphoryl-undecaprenol N-acetylglucosamine transferase.